Here is a 587-residue protein sequence, read N- to C-terminus: uncharacterized protein (587 aa).

Residues 61–426 form the YcaO domain; it reads GKGASKKAAL…DLPNWHHDAE (366 aa).

This is an uncharacterized protein from Haemophilus influenzae (strain ATCC 51907 / DSM 11121 / KW20 / Rd).